The primary structure comprises 122 residues: Large ribosomal subunit protein uL14 (122 aa).

This sequence belongs to the universal ribosomal protein uL14 family. Part of the 50S ribosomal subunit. Forms a cluster with proteins L3 and L19. In the 70S ribosome, L14 and L19 interact and together make contacts with the 16S rRNA in bridges B5 and B8.

Functionally, binds to 23S rRNA. Forms part of two intersubunit bridges in the 70S ribosome. The sequence is that of Large ribosomal subunit protein uL14 from Streptococcus agalactiae serotype Ia (strain ATCC 27591 / A909 / CDC SS700).